We begin with the raw amino-acid sequence, 1056 residues long: Carbamoyl phosphate synthase large chain (1056 aa).

Positions 1–397 are carboxyphosphate synthetic domain; it reads MPRRTDIKKV…GFKKALRSID (397 aa). ATP is bound by residues arginine 127, arginine 167, glycine 173, glycine 174, glutamate 206, valine 208, glutamate 213, glycine 239, valine 240, histidine 241, glutamine 282, and glutamate 294. Residues 131-323 enclose the ATP-grasp 1 domain; the sequence is KALMQKIGEP…IARVAAKIAI (193 aa). Mg(2+)-binding residues include glutamine 282, glutamate 294, and asparagine 296. Glutamine 282, glutamate 294, and asparagine 296 together coordinate Mn(2+). Residues 398–530 are oligomerization domain; the sequence is TDINTHTNHN…YSTHGVTTDI (133 aa). A carbamoyl phosphate synthetic domain region spans residues 531–919; the sequence is IQNDKKKVLI…YKACISADNE (389 aa). Positions 661-852 constitute an ATP-grasp 2 domain; that stretch reads SELLDALKIP…LAKVAAKVMI (192 aa). Residues arginine 697, serine 736, leucine 738, glutamate 743, glycine 768, valine 769, histidine 770, serine 771, glutamine 811, and glutamate 823 each coordinate ATP. Residues glutamine 811, glutamate 823, and asparagine 825 each coordinate Mg(2+). 3 residues coordinate Mn(2+): glutamine 811, glutamate 823, and asparagine 825. One can recognise an MGS-like domain in the interval 918–1056; that stretch reads NELPIEGNVF…PISHYLSEVE (139 aa). Residues 920-1056 form an allosteric domain region; that stretch reads LPIEGNVFIS…PISHYLSEVE (137 aa).

Belongs to the CarB family. Composed of two chains; the small (or glutamine) chain promotes the hydrolysis of glutamine to ammonia, which is used by the large (or ammonia) chain to synthesize carbamoyl phosphate. Tetramer of heterodimers (alpha,beta)4. Requires Mg(2+) as cofactor. Mn(2+) is required as a cofactor.

The enzyme catalyses hydrogencarbonate + L-glutamine + 2 ATP + H2O = carbamoyl phosphate + L-glutamate + 2 ADP + phosphate + 2 H(+). The catalysed reaction is hydrogencarbonate + NH4(+) + 2 ATP = carbamoyl phosphate + 2 ADP + phosphate + 2 H(+). It functions in the pathway amino-acid biosynthesis; L-arginine biosynthesis; carbamoyl phosphate from bicarbonate: step 1/1. It participates in pyrimidine metabolism; UMP biosynthesis via de novo pathway; (S)-dihydroorotate from bicarbonate: step 1/3. Functionally, large subunit of the glutamine-dependent carbamoyl phosphate synthetase (CPSase). CPSase catalyzes the formation of carbamoyl phosphate from the ammonia moiety of glutamine, carbonate, and phosphate donated by ATP, constituting the first step of 2 biosynthetic pathways, one leading to arginine and/or urea and the other to pyrimidine nucleotides. The large subunit (synthetase) binds the substrates ammonia (free or transferred from glutamine from the small subunit), hydrogencarbonate and ATP and carries out an ATP-coupled ligase reaction, activating hydrogencarbonate by forming carboxy phosphate which reacts with ammonia to form carbamoyl phosphate. In Methanosphaerula palustris (strain ATCC BAA-1556 / DSM 19958 / E1-9c), this protein is Carbamoyl phosphate synthase large chain.